The sequence spans 172 residues: RNA silencing suppressor p19 (172 aa).

Basic and acidic residues predominate over residues 1 to 15 (MERAIQGNDAREQAY). Residues 1–37 (MERAIQGNDAREQAYGERWNGGSGSSTSPFKLPDESP) are disordered.

It belongs to the tombusvirus protein p19 family. As to quaternary structure, homodimer.

Functionally, viral suppressor of RNA silencing which binds specifically to silencing RNAs (siRNAs). Acts as a molecular caliper to specifically select siRNAs based on the length of the duplex region of the RNA. The polypeptide is RNA silencing suppressor p19 (Capsicum annuum (Capsicum pepper)).